A 49-amino-acid chain; its full sequence is Delta-actitoxin-Axm1b (49 aa).

The tract at residues 1–7 (GVPCLCD) is well-structured region. 3 disulfide bridges follow: Cys4/Cys46, Cys6/Cys36, and Cys29/Cys47. An arg-14 loop (non-well-structured region) region spans residues 8-17 (SDGPRPRGNT). A well-structured region region spans residues 18–49 (LSGILWFYPSGCPSGWHNCKAHGPNIGWCCKK).

Belongs to the sea anemone sodium channel inhibitory toxin family. Type I subfamily.

It localises to the secreted. The protein localises to the nematocyst. Binds specifically to voltage-gated sodium channels (Nav) (site 3), thereby delaying their inactivation. This toxin has the highest affinity of all anemone toxins for the mammalian sodium channel, whereas its paralog Anthopleurin-A retains the greatest capacity to discriminate between cardiac (Nav1.5/SCN5A) and neuronal sodium channels. When tested electrophysiologically, this toxin exhibits a high affinity for multiple sodium channels with a 50-fold preference for rat cardiac (Nav1.5/SCN5A) over neuronal channels (0.1 nM versus 5 nM). When tested by ion flux, the affinities are similar and appear to have higher affinity (9 nM versus 22 nM). The residue Lys-37 of this toxin has been shown to interact with channel Nav1.5 (residue Asp-1612 in rat and Asp-1610 in human), which is located in the DIV S3-S4 linker (corresponding to channel site 3). Selectively modifies sodium channel inactivation from the open state with little effect on channel activation or on inactivation from closed states. Does not display phospholipid-binding activities, suggesting that the domain IV S3-S4 linker is located at the extracellular surface and not buried in the phospholipid bilayer. The sequence is that of Delta-actitoxin-Axm1b from Anthopleura xanthogrammica (Giant green sea anemone).